The following is a 226-amino-acid chain: MKSATRSATTAFFIPQETGAIRPIGGISKRSFDVLIAILALIALSPLFLLVMGLVKFSDGGSIFYGHRRIGHNGQTFKCLKFRTMMENGDRVLQEFFKSNPAAYEEWRTTRKLQDDPRVTVVGSVLRKLSLDELPQLLNIIRGEMSIVGPRPVVEDELELYDSAAEFYLRSRPGLTGLWQISGRNDVSYATRVAFDTHYVQNWSLLADLVIVFKTIPAVCLSRGSY.

A helical membrane pass occupies residues 34 to 54 (VLIAILALIALSPLFLLVMGL).

This sequence belongs to the bacterial sugar transferase family.

It localises to the cell membrane. Its pathway is glycan metabolism; exopolysaccharide biosynthesis. Functionally, needed for the addition of the first sugar (galactose) to the isoprenoid carrier. May function as a sugar transferase. The protein is Exopolysaccharide production protein ExoY (exoY) of Sinorhizobium fredii (strain NBRC 101917 / NGR234).